Consider the following 367-residue polypeptide: Inner membrane amino-acid ABC transporter permease protein YhdY (367 aa).

Over 1–36 (MTKVLLSHPPRPASHNSSRAMVWVRKNLFSSWSNSL) the chain is Cytoplasmic. Residues 37–57 (LTIGCIWLMWELIPPLLNWAF) traverse the membrane as a helical segment. The Periplasmic segment spans residues 58–99 (LQANWVGSTRADCTKAGACWVFIHERFGQFMYGLYPHDQRWR). Residues 100–120 (INLALLIGLVSIAPMFWKILP) traverse the membrane as a helical segment. The Cytoplasmic portion of the chain corresponds to 121–125 (HRGRY). The helical transmembrane segment at 126 to 146 (IAAWAVIYPLIVWWLMYGGFF) threads the bilayer. Over 147–162 (ALERVETRQWGGLTLT) the chain is Periplasmic. The ABC transmembrane type-1 domain maps to 159 to 353 (LTLTLIIASV…IFCFSMSRYS (195 aa)). The helical transmembrane segment at 163–183 (LIIASVGIAGALPWGILLALG) threads the bilayer. The Cytoplasmic segment spans residues 184–192 (RRSHMPIVR). Residues 193 to 213 (ILSVIFIEFWRGVPLITVLFM) form a helical membrane-spanning segment. Over 214-233 (SSVMLPLFMAEGTSIDKLIR) the chain is Periplasmic. Residues 234–254 (ALVGVILFQSAYVAEVVRGGL) form a helical membrane-spanning segment. At 255 to 291 (QALPKGQYEAAESLALGYWKTQGLVILPQALKLVIPG) the chain is on the cytoplasmic side. A helical membrane pass occupies residues 292 to 312 (LVNTIIALFKDTSLVIIIGLF). Topologically, residues 313-326 (DLFSSVQQATVDPA) are periplasmic. Residues 327–347 (WLGMSTEGYVFAALIYWIFCF) form a helical membrane-spanning segment. Residues 348-367 (SMSRYSQYLEKRFNTGRTPH) lie on the Cytoplasmic side of the membrane.

The protein belongs to the binding-protein-dependent transport system permease family. HisMQ subfamily.

It is found in the cell inner membrane. Its function is as follows. Probably part of the binding-protein-dependent transport system YdhWXYZ for an amino acid; probably responsible for the translocation of the substrate across the membrane. This Escherichia coli (strain K12) protein is Inner membrane amino-acid ABC transporter permease protein YhdY (yhdY).